Consider the following 150-residue polypeptide: Guanine nucleotide-binding protein subunit gamma 2 (150 aa).

A compositionally biased stretch (acidic residues) spans 1–11; it reads MRGEANGEEEQ. The segment at 1 to 59 is disordered; sequence MRGEANGEEEQQPPRRNHLRDDAEEEEEVERRAARPVSGQQQQQQRRRPTDVGGGAAMR. A coiled-coil region spans residues 65–97; the sequence is GKHRLSAAIARLDQELQSLQDELNELETMEPAS. One can recognise a G protein gamma domain in the interval 71 to 137; it reads AAIARLDQEL…RWFQRVRSSR (67 aa).

In terms of assembly, g proteins are composed of 3 units, alpha, beta and gamma. Interacts with the beta subunit RGB1.

It is found in the cell membrane. In terms of biological role, guanine nucleotide-binding proteins (G proteins) are involved as modulators or transducers in various transmembrane signaling systems. The protein is Guanine nucleotide-binding protein subunit gamma 2 of Oryza sativa subsp. indica (Rice).